Reading from the N-terminus, the 232-residue chain is Large ribosomal subunit protein uL1 (232 aa).

This sequence belongs to the universal ribosomal protein uL1 family. In terms of assembly, part of the 50S ribosomal subunit.

In terms of biological role, binds directly to 23S rRNA. The L1 stalk is quite mobile in the ribosome, and is involved in E site tRNA release. Protein L1 is also a translational repressor protein, it controls the translation of the L11 operon by binding to its mRNA. The chain is Large ribosomal subunit protein uL1 from Methylobacterium radiotolerans (strain ATCC 27329 / DSM 1819 / JCM 2831 / NBRC 15690 / NCIMB 10815 / 0-1).